The chain runs to 410 residues: Peptidase T (410 aa).

Histidine 79 serves as a coordination point for Zn(2+). Aspartate 81 is a catalytic residue. Aspartate 142 is a binding site for Zn(2+). Glutamate 176 (proton acceptor) is an active-site residue. Glutamate 177, aspartate 199, and histidine 381 together coordinate Zn(2+).

This sequence belongs to the peptidase M20B family. Zn(2+) serves as cofactor.

The protein resides in the cytoplasm. It carries out the reaction Release of the N-terminal residue from a tripeptide.. Functionally, cleaves the N-terminal amino acid of tripeptides. This chain is Peptidase T, found in Bacillus cereus (strain ATCC 10987 / NRS 248).